A 224-amino-acid polypeptide reads, in one-letter code: Flagellar L-ring protein (224 aa).

The signal sequence occupies residues 1-15 (MIKYIALASVVLLVG). Residue cysteine 16 is the site of N-palmitoyl cysteine attachment. A lipid anchor (S-diacylglycerol cysteine) is attached at cysteine 16.

It belongs to the FlgH family. As to quaternary structure, the basal body constitutes a major portion of the flagellar organelle and consists of four rings (L,P,S, and M) mounted on a central rod.

The protein localises to the cell outer membrane. The protein resides in the bacterial flagellum basal body. Functionally, assembles around the rod to form the L-ring and probably protects the motor/basal body from shearing forces during rotation. This chain is Flagellar L-ring protein, found in Shewanella frigidimarina (strain NCIMB 400).